A 363-amino-acid polypeptide reads, in one-letter code: RNA exonuclease NGL1 (363 aa).

Residues 1 to 23 constitute a mitochondrion transit peptide; it reads MFTRRFIPVVQSTKQNIGKYVRK.

This sequence belongs to the CCR4/nocturin family.

The protein localises to the mitochondrion. This Saccharomyces cerevisiae (strain ATCC 204508 / S288c) (Baker's yeast) protein is RNA exonuclease NGL1 (NGL1).